The primary structure comprises 301 residues: Cilia- and flagella-associated protein 161 (301 aa).

The tract at residues 269-301 (GNPRDASSSMLDLPKPPTEDTRAMEQAMGLDTQ) is disordered.

In terms of assembly, microtubule inner protein component of sperm flagellar doublet microtubules. Expressed in airway epithelial cells.

It is found in the cytoplasm. It localises to the cytoskeleton. The protein localises to the cilium axoneme. Its subcellular location is the flagellum axoneme. Microtubule inner protein (MIP) part of the dynein-decorated doublet microtubules (DMTs) in cilia axoneme, which is required for motile cilia beating. The polypeptide is Cilia- and flagella-associated protein 161 (Homo sapiens (Human)).